Consider the following 411-residue polypeptide: MVQGPIQVNSEIGKLKTVLLKRPGKELENLVPDHLSGLLFDDIPYLKVAQEEHDKFAQTLRDEGIEVVYLEKLAAESITEPEVRENFINDILTESKKTILGHETEIKEFFSKLSDQELVNKIMAGIRKEEIQLETTHLVEYMDDRYPFYLDPMPNLYFTRDPQASIGRGMTINRMYWRARRRESIFMTYILKHHPRFKDKDVPVWLDRNSPFNIEGGDELVLSKDVLAIGISERTSAQAIEKLARNIFKDANTSFKKIVAIEIPNTRTFMHLDTVLTMIDYDKFTVHAAIFKEENNMNIFTIEQNDGKDDIKITRSSKLRETLAEVLEVEKVDFIPTGNGDVIDGAREQWNDGSNTLCIRPGVVVTYDRNYVSNQLLRDKGIKVIEITGSELVRGRGGPRCMSQPLFREDI.

Cys-401 acts as the Amidino-cysteine intermediate in catalysis.

It belongs to the arginine deiminase family.

It is found in the cytoplasm. The enzyme catalyses L-arginine + H2O = L-citrulline + NH4(+). The protein operates within amino-acid degradation; L-arginine degradation via ADI pathway; carbamoyl phosphate from L-arginine: step 1/2. The protein is Arginine deiminase 1 (arcA1) of Staphylococcus epidermidis (strain ATCC 12228 / FDA PCI 1200).